The primary structure comprises 393 residues: UPF0496 protein At2g18630 (393 aa).

Residues 1–20 (MMGGKSSKSKKNVEFGSPST) form a disordered region. The stretch at 149 to 222 (VNQFEEENED…RLRNIKTWRR (74 aa)) forms a coiled coil. A run of 2 helical transmembrane segments spans residues 226–246 (MVFV…AAVA) and 249–269 (PVVA…GKWC). Residues 299–356 (KEMDNISILVRKVEVEIESLLKKAEFAITEEKEVRLAIDEIKKKLDVFTETIEELGEH) adopt a coiled-coil conformation.

This sequence belongs to the UPF0496 family.

It is found in the membrane. The polypeptide is UPF0496 protein At2g18630 (Arabidopsis thaliana (Mouse-ear cress)).